Consider the following 128-residue polypeptide: Small nuclear ribonucleoprotein associated homolog 13 (128 aa).

It belongs to the eukaryotic ribosomal protein eL8 family.

It is found in the nucleus. It localises to the nucleolus. Binds to the 5'-stem-loop of U4 snRNA and may play a role in the late stage of spliceosome assembly. The protein undergoes a conformational change upon RNA-binding. This Caenorhabditis elegans protein is Small nuclear ribonucleoprotein associated homolog 13.